The sequence spans 142 residues: Hemoglobin subunit alpha (142 aa).

The Globin domain occupies 2-142 (VLSANDKSNV…VGNVLTSKYR (141 aa)). An O2-binding site is contributed by His59. His88 is a binding site for heme b.

The protein belongs to the globin family. In terms of assembly, heterotetramer of two alpha chains and two beta chains. Red blood cells.

Its function is as follows. Involved in oxygen transport from the lung to the various peripheral tissues. This chain is Hemoglobin subunit alpha (HBA), found in Aptenodytes forsteri (Emperor penguin).